The sequence spans 412 residues: MPHFDCLIVGGGHAGAQAAILLRQLKFEGTVGLISGETEYPYERPPLSKDYLAGEKIFDRILLRPRNFWGDQGIELFLGERVKALQPAEHSLTTASGAEFTYGKLIWAGGGVARRLSCPGGTAKGLFTVRTRADVDAVMAVLPQAERFAIVGGGYIGLEAAAVLSKLGKQVTLIEALDRVLARVAGPELSAFFEDEHRAHGVDVRLACGVEAIEADEQDRATGVRLADGTIIPTDAVIVGIGIVPETGPLLLAGASGGNGVDVDEYCLTSLPDVYAIGDCAAHENRFAEGRRVRVESVQNANDQARTAVQHIIGTPAPYDAVPWFWSNQYDLRLQTVGLAVAHDERVVRGDPATRSFSVVYLRQGHVVALDCVNRTKDYVQGRALVVDGTRVDRDRLADADTPLKELTAAQG.

FAD is bound by residues Ala14, Lys49, Val82, Arg130, Asp279, and Val298.

The protein belongs to the FAD-dependent oxidoreductase family. In terms of assembly, monomer. The three-component monooxygenase is composed of an oxygenase (LigXa), a ferredoxin (LigXc) and a ferredoxin reductase (LigXd). FAD is required as a cofactor.

The enzyme catalyses 5,5'-dehydrodivanillate + NADH + O2 + H(+) = 2,2',3-trihydroxy-3'-methoxy-5,5'-dicarboxybiphenyl + formaldehyde + NAD(+) + H2O. In terms of biological role, involved in the catabolism of 5,5'-dehydrodivanillate (DDVA), an intermediate in the biodegradation of lignin. Part of a three-component monooxygenase that catalyzes the O-demethylation of DDVA, leading to the formation of 2,2',3-trihydroxy-3'-methoxy-5,5'-dicarboxybiphenyl (OH-DDVA). LigXd probably transfers the electrons from NADH to LigXc. In Sphingobium sp. (strain NBRC 103272 / SYK-6), this protein is 5,5'-dehydrodivanillate O-demethylase ferredoxin reductase subunit.